Reading from the N-terminus, the 97-residue chain is Nucleoid-associated protein HP_0035 (97 aa).

Belongs to the YbaB/EbfC family. As to quaternary structure, homodimer.

Its subcellular location is the cytoplasm. It is found in the nucleoid. Functionally, binds to DNA and alters its conformation. May be involved in regulation of gene expression, nucleoid organization and DNA protection. The chain is Nucleoid-associated protein HP_0035 from Helicobacter pylori (strain ATCC 700392 / 26695) (Campylobacter pylori).